A 581-amino-acid polypeptide reads, in one-letter code: MKASQFFVSTLKEAPADAEVVSHKLMTRAGLIKKLGAGIYNYMPMGLRVIRKVEAIVREEMNRAGAVEVTMPVVQPAEYWQETGRFDKMGPELLRIRDRHGRDFVVQPTSEEVVTDIARQELRSYKQLPKNLYQIQTKFRDERRPRFGLMRGREFIMKDAYSFDRDQAAAKASYQVMAQAYRRIFDRFGLTYRAVAADSGAIGGDLSEEFQVIAATGEDAIVYCPQSDYAANMEKAEALPPQGPRPAASQALARTATPGKSTCADVAQLLGVPLQATVKSLVLATDETNESGEIVRSQVWLLLLRGDHDMNEIKVGKVPGLDAGFRFATVGEIEDHFGCRPGYLGPLNLRQPVRLVVDREVAVMADWICGANEVDFHMTGVNWGRDLPEPDVVADLRNVVAGDPSPDGKGTLAIERGIEVGHVFYLGTKYSRAMNATFLGEDGKPAFFEMGCYGIGITRLPAAAIEQNHDERGIIWPDAIAPFTVVVCPIGMDRSDEVRAAAEKLHADLLTAGVDVILDDRGERPGAMFADWELIGVPHRVVLSDRGLKEGQVEYQHRRDAAATKVASADIFAFIKDRIKV.

The protein belongs to the class-II aminoacyl-tRNA synthetase family. ProS type 1 subfamily. Homodimer.

Its subcellular location is the cytoplasm. The enzyme catalyses tRNA(Pro) + L-proline + ATP = L-prolyl-tRNA(Pro) + AMP + diphosphate. Catalyzes the attachment of proline to tRNA(Pro) in a two-step reaction: proline is first activated by ATP to form Pro-AMP and then transferred to the acceptor end of tRNA(Pro). As ProRS can inadvertently accommodate and process non-cognate amino acids such as alanine and cysteine, to avoid such errors it has two additional distinct editing activities against alanine. One activity is designated as 'pretransfer' editing and involves the tRNA(Pro)-independent hydrolysis of activated Ala-AMP. The other activity is designated 'posttransfer' editing and involves deacylation of mischarged Ala-tRNA(Pro). The misacylated Cys-tRNA(Pro) is not edited by ProRS. This is Proline--tRNA ligase from Paracidovorax citrulli (strain AAC00-1) (Acidovorax citrulli).